Here is an 881-residue protein sequence, read N- to C-terminus: Serine/threonine-protein kinase/endoribonuclease IRE1b (881 aa).

A signal peptide spans 1–21 (MRGSALLDLILFLLVSPLAHS). The Lumenal segment spans residues 22-357 (FKGSEISKFY…KQAGFASKFS (336 aa)). Asn-115 carries an N-linked (GlcNAc...) asparagine glycan. Residues 358 to 378 (GLIVLIFGFCVTMLSVCGLFF) form a helical membrane-spanning segment. The Cytoplasmic segment spans residues 379 to 881 (YRLRQSIRIK…FFKYSKTTVF (503 aa)). The 286-residue stretch at 459-744 (FVSNKEIAKG…AQDVMHHPLF (286 aa)) folds into the Protein kinase domain. ATP contacts are provided by residues 465–473 (IAKGSNGTV) and Lys-487. An ATP selon article region spans residues 481–502 (GRLVAVKRLVQSHHDVAQKEIL). Asp-608 (proton acceptor) is an active-site residue. A disordered region spans residues 642–661 (LTRNSTGLGSGSSGWQAPEQ). A KEN domain is found at 747–878 (SDMRLSFLRD…EEFFFKYSKT (132 aa)).

It belongs to the protein kinase superfamily. Ser/Thr protein kinase family. In terms of assembly, homodimer; disulfide-linked. Dimer formation is driven by hydrophobic interactions within the N-terminal luminal domains and stabilized by disulfide bridges. The cofactor is Mg(2+). Post-translationally, autophosphorylated. In terms of tissue distribution, ubiquitous. Detected in the apical meristem, at leaf margins where vascular bundles end, in the anthers before pollen is formed and in the ovules at a very early stage of development. There is no expression in more mature embryos. Also strongly expressed in the cotyledons immediately after germination but not later on.

It localises to the endoplasmic reticulum membrane. The catalysed reaction is L-seryl-[protein] + ATP = O-phospho-L-seryl-[protein] + ADP + H(+). It carries out the reaction L-threonyl-[protein] + ATP = O-phospho-L-threonyl-[protein] + ADP + H(+). With respect to regulation, the kinase domain is activated by trans-autophosphorylation. Kinase activity is required for activation of the endoribonuclease domain. Functionally, senses unfolded proteins in the lumen of the endoplasmic reticulum via its N-terminal domain which leads to enzyme auto-activation. The active endoribonuclease domain splices bZIP60 mRNA to generate a new C-terminus, converting it into a potent unfolded-protein response transcriptional activator which then induces transcription of UPR target genes. Involved in organ growth regulation. Plays a role in plant immunity and abiotic stress responses. Required for ER stress-induced autophagy. This Arabidopsis thaliana (Mouse-ear cress) protein is Serine/threonine-protein kinase/endoribonuclease IRE1b (IRE1B).